The primary structure comprises 366 residues: NADP-dependent oxidoreductase domain-containing protein 1 (366 aa).

This sequence belongs to the pyrroline-5-carboxylate reductase family.

Its function is as follows. Probable oxidoreductase. This Mus musculus (Mouse) protein is NADP-dependent oxidoreductase domain-containing protein 1 (Noxred1).